The following is a 382-amino-acid chain: MATSSSSSSEEERSLRECELYVQKHNIQQLLKDCIVQLCTVRPDRPMGFLREYFERLEKEETKQLLNQQKSGSRSDSREDEISPPPPMNPVVKGRRRRGAISAEVYTEEDAASYVRKVIPKDYKTMAALAKAIEKNVLFAHLDDNERSDIFDAMFPVTYIAGETVIQQGDEGDNFYVVDQGEMDVYVNNEWATSVGEGGSFGELALIYGTPRAATVKAKTNVKLWGIDRDSYRRILMGSTLRKRKMYEEFLSKVSILESLDKWERLTVADALEPVQFEDGQKIVVQGEPGDEFFIILEGTAAVLQRRSENEEFVEVGRLAPSDYFGEIALLMNRPRAATVVARGLLKCVKLDRPRFERVLGPCSDILKRNIQQYNSFVSLSV.

Position 2 is an N-acetylalanine (A2). The interval A2–N136 is dimerization and phosphorylation. Residues T62–R96 form a disordered region. Residues R97–I101 carry the Pseudophosphorylation motif motif. Residues L138–S255, E203, R212, I256–V382, E327, and R336 contribute to the 3',5'-cyclic AMP site.

It belongs to the cAMP-dependent kinase regulatory chain family. The inactive form of the enzyme is composed of two regulatory chains and two catalytic chains. Activation by cAMP produces two active catalytic monomers and a regulatory dimer that binds four cAMP molecules. Post-translationally, the pseudophosphorylation site binds to the substrate-binding region of the catalytic chain but is not phosphorylated. The physiological significance of phosphorylations by other kinases is unclear.

The protein localises to the cell membrane. This is cAMP-dependent protein kinase type I-alpha regulatory subunit (PRKAR1A) from Gallus gallus (Chicken).